Here is a 424-residue protein sequence, read N- to C-terminus: MSNYYYYYGGGRYDWLKTVEPTNFLKIGLPYQAHPLHLQHQATTPPSILEKFKRADILLNEVKSEMDPLMLQPETEKKLYQVLGSIDMFKGLRKKVEYTYNAQIVTNAWLKMYELLNTMNFNNTSQAFCNCELPGGFISAINHFNHTMMHYPTFNWVASSLYPSSETDALEDHYGLYQCNPDNWLMQSPLLKKNMDYNNGDVTIASNVKNLALKATQKLTPIHLYTADGGINVGHDYNKQEELNLKLHFGQALTGLLSLSKGGNMILKHYTLNHAFTLSLICVFSHFFEELYITKPTSSRPSNSETYIVGKNRLRLFTPKEEQVLLKRLEFFNDTPLVDLSLYQNLLESIYFAVETIHLKQQIEFLNFGMKCYRHFYNKIKLLNEYLAPKKKIFQDRWRVLNKLYVLEKKHKLKLCTSFQGSVA.

Residues Q103–R315 enclose the Adrift-type SAM-dependent 2'-O-MTase domain. G135 and D228 together coordinate S-adenosyl-L-methionine. Residue K268 is the Proton acceptor of the active site.

The protein resides in the virion. This chain is Probable methyltransferase EP424R, found in Ornithodoros (relapsing fever ticks).